The sequence spans 61 residues: Early E3 6.4 kDa protein (61 aa).

Residues 1–25 (MGNAGPLKLHTITKPGTIPYPPHGS) are disordered.

The sequence is that of Early E3 6.4 kDa protein from Homo sapiens (Human).